The sequence spans 215 residues: Large ribosomal subunit protein uL3 (215 aa).

An N5-methylglutamine modification is found at Gln156.

This sequence belongs to the universal ribosomal protein uL3 family. Part of the 50S ribosomal subunit. Forms a cluster with proteins L14 and L19. In terms of processing, methylated by PrmB.

In terms of biological role, one of the primary rRNA binding proteins, it binds directly near the 3'-end of the 23S rRNA, where it nucleates assembly of the 50S subunit. The protein is Large ribosomal subunit protein uL3 of Xylella fastidiosa (strain M23).